We begin with the raw amino-acid sequence, 564 residues long: CTP synthase (564 aa).

The tract at residues 1–265 is amidoligase domain; the sequence is MTKFVFVTGG…DEIVCHRLGI (265 aa). CTP is bound at residue S13. S13 serves as a coordination point for UTP. Residues 14-19 and D71 contribute to the ATP site; that span reads SLGKGI. Residues D71 and E139 each coordinate Mg(2+). CTP is bound by residues 146–148, 186–191, and K222; these read DIE and KTKPTQ. Residues 186–191 and K222 contribute to the UTP site; that span reads KTKPTQ. In terms of domain architecture, Glutamine amidotransferase type-1 spans 290-543; that stretch reads SIALVGKYVD…VRAAISFADK (254 aa). G351 contributes to the L-glutamine binding site. The Nucleophile; for glutamine hydrolysis role is filled by C378. L-glutamine-binding positions include 379 to 382, E402, and R469; that span reads LGMQ. Residues H516 and E518 contribute to the active site.

This sequence belongs to the CTP synthase family. In terms of assembly, homotetramer.

It carries out the reaction UTP + L-glutamine + ATP + H2O = CTP + L-glutamate + ADP + phosphate + 2 H(+). The enzyme catalyses L-glutamine + H2O = L-glutamate + NH4(+). It catalyses the reaction UTP + NH4(+) + ATP = CTP + ADP + phosphate + 2 H(+). The protein operates within pyrimidine metabolism; CTP biosynthesis via de novo pathway; CTP from UDP: step 2/2. Allosterically activated by GTP, when glutamine is the substrate; GTP has no effect on the reaction when ammonia is the substrate. The allosteric effector GTP functions by stabilizing the protein conformation that binds the tetrahedral intermediate(s) formed during glutamine hydrolysis. Inhibited by the product CTP, via allosteric rather than competitive inhibition. Catalyzes the ATP-dependent amination of UTP to CTP with either L-glutamine or ammonia as the source of nitrogen. Regulates intracellular CTP levels through interactions with the four ribonucleotide triphosphates. In Nitrosomonas eutropha (strain DSM 101675 / C91 / Nm57), this protein is CTP synthase.